A 312-amino-acid polypeptide reads, in one-letter code: Cytochrome f (312 aa).

A signal peptide spans 1-30 (MYLSKNFFLNLKTFIFSFFVLCFFSQSAQA). Tyrosine 31, cysteine 51, cysteine 54, and histidine 55 together coordinate heme. A helical transmembrane segment spans residues 278–298 (VQGLLLFSLFILLAQIFLVLK).

It belongs to the cytochrome f family. In terms of assembly, the 4 large subunits of the cytochrome b6-f complex are cytochrome b6, subunit IV (17 kDa polypeptide, petD), cytochrome f and the Rieske protein, while the 4 small subunits are PetG, PetL, PetM and PetN. The complex functions as a dimer. The cofactor is heme.

Its subcellular location is the plastid. It localises to the chloroplast thylakoid membrane. Functionally, component of the cytochrome b6-f complex, which mediates electron transfer between photosystem II (PSII) and photosystem I (PSI), cyclic electron flow around PSI, and state transitions. In Bigelowiella natans (Pedinomonas minutissima), this protein is Cytochrome f (petA).